A 289-amino-acid polypeptide reads, in one-letter code: Cell division protein ZipA (289 aa).

Residue M1 is a topological domain, periplasmic. Residues 2-22 traverse the membrane as a helical segment; the sequence is DIGLREWLIVIGLIVIAGILF. Residues 23–289 lie on the Cytoplasmic side of the membrane; it reads DGWRRMRGGK…HERRSLMQKR (267 aa). The disordered stretch occupies residues 66-141; sequence REPSFDEQDL…KEREKAPAVA (76 aa). Over residues 81-99 the composition is skewed to basic and acidic residues; the sequence is REAKERKGGKRQEEPRQGD. Acidic residues predominate over residues 100 to 114; that stretch reads LDLDEGLALEADPSD.

It belongs to the ZipA family. In terms of assembly, interacts with FtsZ via their C-terminal domains.

It localises to the cell inner membrane. In terms of biological role, essential cell division protein that stabilizes the FtsZ protofilaments by cross-linking them and that serves as a cytoplasmic membrane anchor for the Z ring. Also required for the recruitment to the septal ring of downstream cell division proteins. This Pseudomonas aeruginosa (strain LESB58) protein is Cell division protein ZipA.